We begin with the raw amino-acid sequence, 347 residues long: Uroporphyrinogen decarboxylase (347 aa).

Substrate is bound by residues 23–27, Asp73, Tyr150, Thr205, and His323; that span reads RQAGR.

It belongs to the uroporphyrinogen decarboxylase family. As to quaternary structure, homodimer.

It is found in the cytoplasm. The catalysed reaction is uroporphyrinogen III + 4 H(+) = coproporphyrinogen III + 4 CO2. Its pathway is porphyrin-containing compound metabolism; protoporphyrin-IX biosynthesis; coproporphyrinogen-III from 5-aminolevulinate: step 4/4. In terms of biological role, catalyzes the decarboxylation of four acetate groups of uroporphyrinogen-III to yield coproporphyrinogen-III. This Ruthia magnifica subsp. Calyptogena magnifica protein is Uroporphyrinogen decarboxylase.